We begin with the raw amino-acid sequence, 195 residues long: MGCTRDAILDALENLTADELKKFKMKLLSVPLREGYGRIPRGTLLPLDAVDLTDKLVSYYLEAYGAELTALVLRDMGMQEVAEQLQETMSKGPRNVLAEVRDPLQKTAKPGLHFVDQHRAALIARVTVVDGVLDALYGKVLTEEQYQAVRAERTSSDKMRKLFSFSPAWNMTCKDLLLQALRDTQPYLVDDLEQS.

A Pyrin domain is found at 1-91 (MGCTRDAILD…AEQLQETMSK (91 aa)). Residues K55 and K174 each participate in a glycyl lysine isopeptide (Lys-Gly) (interchain with G-Cter in ubiquitin) cross-link. The CARD domain maps to 107-195 (TAKPGLHFVD…PYLVDDLEQS (89 aa)). The residue at position 195 (S195) is a Phosphoserine.

Self-associates; enforced oligomerization induces apoptosis, NF-kappa-B regulation and interleukin-1 beta secretion. Homooligomers can form disk-like particles of approximately 12 nm diameter and approximately 1 nm height. Component of several inflammasomes containing one pattern recognition receptor/sensor, such as NLRP1, NLRP2, NLRP3, NLRP6, NLRC4, AIM2, MEFV or NOD2, and probably NLRC4 or NLRP12. Major component of the ASC pyroptosome, a 1-2 um supramolecular assembly (one per macrophage cell) which consists of oligomerized PYCARD dimers and CASP1. Interacts with CASP1 (precursor form); the interaction induces activation of CASP1 leading to the processing of interleukin-1 beta; PYCARD competes with RIPK2 for binding to CASP1. Interacts with NLRP3; the interaction requires the homooligomerization of NLRP3. Interacts with NLRP2, NLRC4, MEFV, CARD16, AIM2, NOD2, RIGI, RIPK2, PYDC1, PYDC2, NLRP10, CASP8, CHUK, IKBKB and BAX. Component of the AIM2 PANoptosome complex, a multiprotein complex that drives inflammatory cell death (PANoptosis). Post-translationally, phosphorylated. 'Lys-63'-linked polyubiquitination by TRAF3 is critical for speck formation and inflammasome activation. 'Lys-63'-linked deubiquitinated by USP50; a crucial step for NLRP3-mediated inflammasome activation. 'Lys-63'-linked polyubiquitination by PELI1 is also critical for speck formation and inflammasome activation. Deubiquitinated by USP3 that cleaves 'Lys-48'-linked ubiquitin chains and strengthens its stability by blocking proteasomal degradation.

The protein localises to the cytoplasm. Its subcellular location is the inflammasome. The protein resides in the endoplasmic reticulum. It is found in the mitochondrion. It localises to the nucleus. Functionally, functions as a key mediator in apoptosis and inflammation. Promotes caspase-mediated apoptosis involving predominantly caspase-8 and also caspase-9 in a probable cell type-specific manner. Involved in activation of the mitochondrial apoptotic pathway, promotes caspase-8-dependent proteolytic maturation of BID independently of FADD in certain cell types and also mediates mitochondrial translocation of BAX and activates BAX-dependent apoptosis coupled to activation of caspase-9, -2 and -3. Involved in innate immune response by acting as an integral adapter in the assembly of various inflammasomes (NLRP2, NLRP3, NLRP6 and AIM2) which recruit and activate caspase-1 leading to processing and secretion of pro-inflammatory cytokines. Caspase-1-dependent inflammation leads to macrophage pyroptosis, a form of cell death. The function as activating adapter in different types of inflammasomes is mediated by the pyrin and CARD domains and their homotypic interactions. Clustered PYCARD nucleates the formation of caspase-1 filaments through the interaction of their respective CARD domains, acting as a platform for of caspase-1 polymerization. In the NLRC4 inflammasomes seems not be required but facilitates the processing of procaspase-1. In cooperation with NOD2 involved in an inflammasome activated by bacterial muramyl dipeptide leading to caspase-1 activation. May be involved in RIGI-triggered pro-inflammatory responses and inflammasome activation. In collaboration with AIM2 which detects cytosolic double-stranded DNA may also be involved in a caspase-1-independent cell death that involves caspase-8. In adaptive immunity may be involved in maturation of dendritic cells to stimulate T-cell immunity and in cytoskeletal rearrangements coupled to chemotaxis and antigen uptake may be involved in post-transcriptional regulation of the guanine nucleotide exchange factor DOCK2; the latter function is proposed to involve the nuclear form. Also involved in transcriptional activation of cytokines and chemokines independent of the inflammasome; this function may involve AP-1, NF-kappa-B, MAPK and caspase-8 signaling pathways. For regulation of NF-kappa-B activating and inhibiting functions have been reported. Modulates NF-kappa-B induction at the level of the IKK complex by inhibiting kinase activity of CHUK and IKBK. Proposed to compete with RIPK2 for association with CASP1 thereby down-regulating CASP1-mediated RIPK2-dependent NF-kappa-B activation and activating interleukin-1 beta processing. Modulates host resistance to DNA virus infection, probably by inducing the cleavage of and inactivating CGAS in presence of cytoplasmic double-stranded DNA. The chain is Apoptosis-associated speck-like protein containing a CARD (PYCARD) from Bos taurus (Bovine).